The following is a 635-amino-acid chain: Sodium- and chloride-dependent transporter XTRP3B (635 aa).

The interval 1–38 (MESPSAHAVSLPEDEELQPWGGAGGPGQHPGRPRSTEC) is disordered. Residues 1–56 (MESPSAHAVSLPEDEELQPWGGAGGPGQHPGRPRSTECAHPGVVEKVRPKWDNPLQ) lie on the Cytoplasmic side of the membrane. Residues 57–77 (FLLVCISYAVGLGNVWRFPYL) traverse the membrane as a helical segment. Topologically, residues 78-85 (CQMYGGGN) are extracellular. Residues 86-106 (FLVPYIIMLIVEGMPLLYLEL) traverse the membrane as a helical segment. Residues 107–127 (AVGQRMRQGSIGAWRTISPYL) lie on the Cytoplasmic side of the membrane. A helical transmembrane segment spans residues 128–148 (SGVGIASLVVSFLASVYFNVI). Residues 149–208 (NTWALWYLFHSFQDPLPWSVCPLNSNHTGYDEECEKASSTQYFWYRKTLNISPSIQENGG) are Extracellular-facing. Residue Asn174 is glycosylated (N-linked (GlcNAc...) asparagine). Residues 209 to 229 (VQWEPALCLTLAWLMVYLCIL) form a helical membrane-spanning segment. At 230 to 237 (RGTESTGK) the chain is on the cytoplasmic side. Residues 238-258 (VVYFTTSLPYFVLIIYLVRGL) traverse the membrane as a helical segment. Residues 259–284 (TLHGATNGLAYMFTPKIEQLANPKAW) lie on the Extracellular side of the membrane. The helical transmembrane segment at 285 to 305 (INAATQIFFSLGLGCGGLIAF) threads the bilayer. The Cytoplasmic segment spans residues 306–319 (ASYNEPSNDCQKHA). The chain crosses the membrane as a helical span at residues 320–340 (LIVSVINSTTAIFSSIVTFSI). The Extracellular portion of the chain corresponds to 341-432 (YGFKATFNYE…EAIKNMEVSQ (92 aa)). N-linked (GlcNAc...) asparagine glycosylation is present at Asn400. The chain crosses the membrane as a helical span at residues 433–453 (LWSVLYFFMLLTLGMGSMVGT). At 454–474 (GTAILTPLTDSKIISSYLPKE) the chain is on the cytoplasmic side. Residues 475–495 (AISGLVCLLNCAIGMVFTMEA) traverse the membrane as a helical segment. At 496 to 508 (GNYWFDLFNDYTA) the chain is on the extracellular side. The chain crosses the membrane as a helical span at residues 509-529 (TLSLLLIVLVETIAVCYVYGL). Topologically, residues 530–547 (KRFESDLRAMTGRTLSWY) are cytoplasmic. Residues 548-568 (WKVMWAFVSPLLIVGLFIFYL) traverse the membrane as a helical segment. Residues 569–597 (SDYILTGTLQYQAWDATQGHVVTKDYPTY) lie on the Extracellular side of the membrane. Residues 598–618 (ALAVIGLLVASSTMCIPLVAL) form a helical membrane-spanning segment. The Cytoplasmic segment spans residues 619–635 (GTFVTRHFKIREQFSAA).

The protein belongs to the sodium:neurotransmitter symporter (SNF) (TC 2.A.22) family. SLC6A20 subfamily. Interacts with CLTRN. As to expression, detected only in kidney and lung.

Its subcellular location is the apical cell membrane. Its function is as follows. Does not show transporter activity with a range of tested amino acids including proline, glutamine, glutamic acid, leucine, alanine, histidine, glycine and arginine. The protein is Sodium- and chloride-dependent transporter XTRP3B (Slc6a20b) of Mus musculus (Mouse).